We begin with the raw amino-acid sequence, 100 residues long: Small ribosomal subunit protein uS14c (100 aa).

Belongs to the universal ribosomal protein uS14 family. In terms of assembly, part of the 30S ribosomal subunit.

The protein resides in the plastid. It localises to the chloroplast. Its function is as follows. Binds 16S rRNA, required for the assembly of 30S particles. The chain is Small ribosomal subunit protein uS14c from Angiopteris evecta (Mule's foot fern).